The following is a 526-amino-acid chain: Opine oxidase subunit A (526 aa).

Positions 396, 398, 431, and 436 each coordinate [2Fe-2S] cluster.

It to T-protein and to dimethylglycine dehydrogenase. As to quaternary structure, heterodimer of a subunit A and a subunit B. Requires [2Fe-2S] cluster as cofactor.

Its pathway is opine metabolism; octopine degradation. Functionally, oxidative cleavage of octopine into L-arginine and pyruvate. This Rhizobium meliloti (Ensifer meliloti) protein is Opine oxidase subunit A (ooxA).